A 295-amino-acid chain; its full sequence is Probable endonuclease 4 (295 aa).

9 residues coordinate Zn(2+): His78, His118, Glu154, Asp188, His191, His225, Asp238, His240, and Glu270.

The protein belongs to the AP endonuclease 2 family. Requires Zn(2+) as cofactor.

It carries out the reaction Endonucleolytic cleavage to 5'-phosphooligonucleotide end-products.. Its function is as follows. Endonuclease IV plays a role in DNA repair. It cleaves phosphodiester bonds at apurinic or apyrimidinic (AP) sites, generating a 3'-hydroxyl group and a 5'-terminal sugar phosphate. This chain is Probable endonuclease 4, found in Vibrio campbellii (strain ATCC BAA-1116).